Reading from the N-terminus, the 371-residue chain is Queuine tRNA-ribosyltransferase (371 aa).

Aspartate 90 functions as the Proton acceptor in the catalytic mechanism. Substrate contacts are provided by residues 90–94, aspartate 144, glutamine 189, and glycine 215; that span reads DSGGF. Residues 246-252 are RNA binding; it reads GVGTPEN. Aspartate 265 (nucleophile) is an active-site residue. The RNA binding; important for wobble base 34 recognition stretch occupies residues 270 to 274; the sequence is TRNAR. Zn(2+) is bound by residues cysteine 303, cysteine 305, cysteine 308, and histidine 334.

This sequence belongs to the queuine tRNA-ribosyltransferase family. In terms of assembly, homodimer. Within each dimer, one monomer is responsible for RNA recognition and catalysis, while the other monomer binds to the replacement base PreQ1. Zn(2+) is required as a cofactor.

The enzyme catalyses 7-aminomethyl-7-carbaguanine + guanosine(34) in tRNA = 7-aminomethyl-7-carbaguanosine(34) in tRNA + guanine. Its pathway is tRNA modification; tRNA-queuosine biosynthesis. Functionally, catalyzes the base-exchange of a guanine (G) residue with the queuine precursor 7-aminomethyl-7-deazaguanine (PreQ1) at position 34 (anticodon wobble position) in tRNAs with GU(N) anticodons (tRNA-Asp, -Asn, -His and -Tyr). Catalysis occurs through a double-displacement mechanism. The nucleophile active site attacks the C1' of nucleotide 34 to detach the guanine base from the RNA, forming a covalent enzyme-RNA intermediate. The proton acceptor active site deprotonates the incoming PreQ1, allowing a nucleophilic attack on the C1' of the ribose to form the product. After dissociation, two additional enzymatic reactions on the tRNA convert PreQ1 to queuine (Q), resulting in the hypermodified nucleoside queuosine (7-(((4,5-cis-dihydroxy-2-cyclopenten-1-yl)amino)methyl)-7-deazaguanosine). The chain is Queuine tRNA-ribosyltransferase from Helicobacter acinonychis (strain Sheeba).